The sequence spans 124 residues: Ribonuclease VapC32 (124 aa).

Positions 2–112 constitute a PINc domain; it reads ILVDTSVWIE…TRDKRLKAAC (111 aa). The Mg(2+) site is built by Asp5 and Asp86.

This sequence belongs to the PINc/VapC protein family. Mg(2+) is required as a cofactor.

Functionally, toxic component of a type II toxin-antitoxin (TA) system. An RNase. Its toxic effect is neutralized by coexpression with cognate antitoxin VapB32. The polypeptide is Ribonuclease VapC32 (Mycobacterium tuberculosis (strain CDC 1551 / Oshkosh)).